The chain runs to 445 residues: DDB1- and CUL4-associated factor 13 (445 aa).

7 WD repeats span residues 64 to 104, 107 to 146, 152 to 191, 194 to 234, 236 to 276, 280 to 319, and 323 to 362; these read GHRD…CSRT, AHDG…YGEK, TILG…PMRS, WGVD…PLKK, ILEM…SPVK, DHVS…SREV, and KRMQ…KLGV. The required for nucleolar location stretch occupies residues 353-441; that stretch reads KANASEKLGV…IPSEKKKHVL (89 aa). Composition is skewed to basic residues over residues 413–426 and 436–445; these read ARRK…KHSK and KKKHVLAVVE. Residues 413-445 form a disordered region; it reads ARRKKDVNRRKHSKPGSVPIPSEKKKHVLAVVE.

This sequence belongs to the WD repeat DCAF13/WDSOF1 family. As to quaternary structure, part of the small subunit (SSU) processome, composed of more than 70 proteins and the RNA chaperone small nucleolar RNA (snoRNA) U3. Component of the DCX(DCAF13) E3 ubiquitin ligase complex, at least composed of CUL4 (CUL4A or CUL4B), DDB1, DCAF13 and RBX1.

It localises to the nucleus. The protein localises to the nucleolus. Its pathway is protein modification; protein ubiquitination. Functionally, part of the small subunit (SSU) processome, first precursor of the small eukaryotic ribosomal subunit. During the assembly of the SSU processome in the nucleolus, many ribosome biogenesis factors, an RNA chaperone and ribosomal proteins associate with the nascent pre-rRNA and work in concert to generate RNA folding, modifications, rearrangements and cleavage as well as targeted degradation of pre-ribosomal RNA by the RNA exosome. Its function is as follows. Substrate-recognition component of a DCX (DDB1-CUL4-X-box) E3 ubiquitin-protein ligase complex. In Xenopus laevis (African clawed frog), this protein is DDB1- and CUL4-associated factor 13 (dcaf13).